A 350-amino-acid polypeptide reads, in one-letter code: Methionine import ATP-binding protein MetN (350 aa).

Residues 2–242 (IELKGISQHF…PRHDVTRALI (241 aa)) form the ABC transporter domain. Position 39-46 (39-46 (GRSGAGKS)) interacts with ATP.

Belongs to the ABC transporter superfamily. Methionine importer (TC 3.A.1.24) family. As to quaternary structure, the complex is composed of two ATP-binding proteins (MetN), two transmembrane proteins (MetI) and a solute-binding protein (MetQ).

The protein resides in the cell inner membrane. It catalyses the reaction L-methionine(out) + ATP + H2O = L-methionine(in) + ADP + phosphate + H(+). The enzyme catalyses D-methionine(out) + ATP + H2O = D-methionine(in) + ADP + phosphate + H(+). Part of the ABC transporter complex MetNIQ involved in methionine import. Responsible for energy coupling to the transport system. The sequence is that of Methionine import ATP-binding protein MetN from Ralstonia nicotianae (strain ATCC BAA-1114 / GMI1000) (Ralstonia solanacearum).